Here is an 875-residue protein sequence, read N- to C-terminus: MELITILEKTVSPDRLELEAAQKFLERAAVENLPTFLVELSRVLANPGNSQVARVAAGLQIRLLTSKDPDIKAQYQQRWLAIDANARREVKNYVLQTLGTETYRPSSASQCVAGIACAEIPVSQWPELIPQLVANVTNPNSTEHMKESTLEAIGYICQDIDPEQLQDKSNEILTAIIQGMRKEEPSNNVKLAATNALLNSLEFTKANFDKESERHFIMQVVCEATQCPDTRVRVAALQNLVKIMSLYYQYMETYMGPALFAITIEAMKSDIDEVALQGIEFWSNVCDEEMDLAIEASEAAEQGRPPEHTSKFYAKGALQYLVPILTQTLTKQDENDDDDDWNPCKAAGVCLMLLSTCCEDDIVPHVLPFIKEHIKNPDWRYRDAAVMAFGSILEGPEPNQLKPLVIQAMPTLIELMKDPSVVVRDTTAWTVGRICELLPEAAINDVYLAPLLQCLIEGLSAEPRVASNVCWAFSSLAEAAYEAADVADDQEEPATYCLSSSFELIVQKLLETTDRPDGHQNNLRSSAYESLMEIVKNSAKDCYPAVQKTTLVIMERLQQVLQMESHIQSTSDRIQFNDLQSLLCATLQNVLWKVQHQDALQISDVVMASLLRMFQSTAGSGGVQEDALMAVSTLVEVLGGEFLKYMEAFKPFLGIGLKNYAECQVCLAAVGLVGDLCRALQSNILPFCDEVMQLLLENLGNENVHRSVKPQILSVFGDITLAIGGEFKKYLEVVLNTLQQASQAQVDKSDFDMVDYLNELRESCLEAYTGIVQGLKGDQENVHPDVMLVQPRVEFILSFIDHIAGDEDHTDGVVACAAGLIGDLCTAFGKDVLKLVEARPMIHELLTEGRRSKTNKAKTLATWATKELRKLKNQA.

M1 carries the N-acetylmethionine modification. 5 HEAT repeats span residues 2 to 31, 33 to 64, 84 to 122, 128 to 159, and 169 to 201; these read ELITILEKTVSPDRLELEAAQKFLERAAVE, LPTFLVELSRVLANPGNSQVARVAAGLQIRLL, ANARREVKNYVLQTLGTETYRPSSASQCVAGIACAEIPV, LIPQLVANVTNPNSTEHMKESTLEAIGYICQD, and SNEILTAIIQGMRKEEPSNNVKLAATNALLNSL. A Phosphoserine modification is found at S12. Residues 21–100 enclose the Importin N-terminal domain; it reads AQKFLERAAV…KNYVLQTLGT (80 aa). At K210 the chain carries N6-acetyllysine. HEAT repeat units follow at residues 211 to 246, 252 to 301, 313 to 359, 363 to 393, 401 to 437, 448 to 484, 499 to 536, 543 to 591, 599 to 638, 643 to 680, 685 to 723, 731 to 775, 785 to 828, and 830 to 872; these read ESERHFIMQVVCEATQCPDTRVRVAALQNLVKIMSL, ETYM…EAAE, YAKG…TCCE, VPHVLPFIKEHIKNPDWRYRDAAVMAFGSIL, LKPLVIQAMPTLIELMKDPSVVVRDTTAWTVGRICEL, LAPLLQCLIEGLSAEPRVASNVCWAFSSLAEAAYEAA, SSSFELIVQKLLETTDRPDGHQNNLRSSAYESLMEIVK, YPAV…QNVL, ALQISDVVMASLLRMFQSTAGSGGVQEDALMAVSTLVEVL, LKYMEAFKPFLGIGLKNYAECQVCLAAVGLVGDLCRAL, LPFCDEVMQLLLENLGNENVHRSVKPQILSVFGDITLAI, LEVV…VQGL, DVML…CTAF, and KDVL…RKLK. The tract at residues 285–461 is essential for high affinity interaction with RPL23A; that stretch reads VCDEEMDLAI…LQCLIEGLSA (177 aa). The interval 328–341 is IAB-binding; the sequence is TLTKQDENDDDDDW. Residues 333 to 418 form a ran-GTP binding region; that stretch reads DENDDDDDWN…MPTLIELMKD (86 aa). K834 and K866 each carry N6-acetyllysine.

This sequence belongs to the importin beta family. Importin beta-1 subfamily. As to quaternary structure, forms a complex with an importin alpha subunit. Interacts with XPO1. Forms a heterodimer with IPO7. The KPNB1/IPO7 heterodimer interacts with H1 histone. Interacts with SNUPN. Interacts with H2A, H2B, H3 and H4 histones. Component of an import snRNP complex composed of KPNB1, SNUPN, SMN1 and ZNF259. Component of a nuclear export receptor complex composed of KPNB1, Ran, SNUPN and XPO1. Interacts with SRY. Interacts with PRKCI/atypical protein kinase C iota. Interacts with KPNA2. Interacts with KPNA7. Interacts with SNAI1 (via zinc fingers) and SNAI2 (via zinc fingers). Interacts with SLC35G1 and STIM1. Interacts with DCAF8. Interacts with RAN. Interacts with NUMA1 (via C-terminus); this interaction is inhibited by RanGTP. Interacts with ZBED1/hDREF; required for nuclear import of ZBED1/hDREF. Interacts with SRP19. Interacts with RPL23A (via BIB domain), RPS7 and RPL5. Post-translationally, mono-ADP-ribosylated by PARP16.

The protein localises to the cytoplasm. It localises to the nucleus envelope. In terms of biological role, functions in nuclear protein import, either in association with an adapter protein, like an importin-alpha subunit, which binds to nuclear localization signals (NLS) in cargo substrates, or by acting as autonomous nuclear transport receptor. Acting autonomously, serves itself as NLS receptor. Docking of the importin/substrate complex to the nuclear pore complex (NPC) is mediated by KPNB1 through binding to nucleoporin FxFG repeats and the complex is subsequently translocated through the pore by an energy requiring, Ran-dependent mechanism. At the nucleoplasmic side of the NPC, Ran binds to importin-beta and the three components separate and importin-alpha and -beta are re-exported from the nucleus to the cytoplasm where GTP hydrolysis releases Ran from importin. The directionality of nuclear import is thought to be conferred by an asymmetric distribution of the GTP- and GDP-bound forms of Ran between the cytoplasm and nucleus. Mediates autonomously the nuclear import of ribosomal proteins RPL23A, RPS7 and RPL5. In association with IPO7, mediates the nuclear import of H1 histone. In vitro, mediates nuclear import of H2A, H2B, H3 and H4 histones. Imports MRTFA, SNAI1 and PRKCI into the nucleus. This is Importin subunit beta-1 (Kpnb1) from Rattus norvegicus (Rat).